The chain runs to 369 residues: Melanoma-associated antigen 10 (369 aa).

The disordered stretch occupies residues 1–131; sequence MPRAPKRQRC…VLPDSESLPR (131 aa). A compositionally biased stretch (low complexity) spans 39–62; the sequence is SSSTSTSSSFPSSFPSSSSSSSSS. Composition is skewed to polar residues over residues 85-96 and 107-121; these read QSAQIACSSPSV and EGSSSQKEESPSTLQ. One can recognise an MAGE domain in the interval 134 to 333; that stretch reads IDEKVTDLVQ…RSFPLWYEEA (200 aa). The tract at residues 340–369 is disordered; it reads RAQDRIATTDDTTAMASASSSATGSFSYPE. The span at 348 to 369 shows a compositional bias: low complexity; that stretch reads TDDTTAMASASSSATGSFSYPE.

Expressed in many tumors of several types, such as melanoma, head and neck squamous cell carcinoma, lung carcinoma and breast carcinoma, but not in normal tissues except for spermatogonia, spermatocytes and placenta.

Its subcellular location is the nucleus. In terms of biological role, not known, though may play a role in embryonal development and tumor transformation or aspects of tumor progression. The sequence is that of Melanoma-associated antigen 10 (MAGEA10) from Homo sapiens (Human).